The sequence spans 200 residues: Recombination protein RecR (200 aa).

The segment at 57–72 (CRQCRTLTEQELCPQC) adopts a C4-type zinc-finger fold. Residues 80-175 (TQLCVVEGPT…AATRIAHGVP (96 aa)) form the Toprim domain.

This sequence belongs to the RecR family.

In terms of biological role, may play a role in DNA repair. It seems to be involved in an RecBC-independent recombinational process of DNA repair. It may act with RecF and RecO. The sequence is that of Recombination protein RecR from Pseudomonas putida (strain GB-1).